We begin with the raw amino-acid sequence, 335 residues long: UPF0353 protein Mflv_3659 (335 aa).

2 consecutive transmembrane segments (helical) span residues 18–38 (WFFL…VVQL) and 67–87 (LPAV…AGPT). One can recognise a VWFA domain in the interval 98–294 (VVMLVIDVSQ…EQLKQVFTNL (197 aa)). A helical membrane pass occupies residues 309–329 (VGWLRLGAGVLALAALGALLI).

The protein belongs to the UPF0353 family.

It localises to the cell membrane. This chain is UPF0353 protein Mflv_3659, found in Mycolicibacterium gilvum (strain PYR-GCK) (Mycobacterium gilvum (strain PYR-GCK)).